Here is a 206-residue protein sequence, read N- to C-terminus: Small ribosomal subunit protein uS4 (206 aa).

Residues 96-156 (GRLDNVVYRM…EKSKKQARIK (61 aa)) enclose the S4 RNA-binding domain.

Belongs to the universal ribosomal protein uS4 family. Part of the 30S ribosomal subunit. Contacts protein S5. The interaction surface between S4 and S5 is involved in control of translational fidelity.

One of the primary rRNA binding proteins, it binds directly to 16S rRNA where it nucleates assembly of the body of the 30S subunit. Functionally, with S5 and S12 plays an important role in translational accuracy. The polypeptide is Small ribosomal subunit protein uS4 (Haemophilus influenzae (strain ATCC 51907 / DSM 11121 / KW20 / Rd)).